The following is a 466-amino-acid chain: Dihydrolipoyl dehydrogenase 3 (466 aa).

Residues 33–42 (EGRSTLGGTC), Lys-51, and Gly-115 each bind FAD. Cys-42 and Cys-47 are oxidised to a cystine. Residues 181 to 185 (GAGVI), Glu-204, Val-238, and 271 to 274 (AIGR) contribute to the NAD(+) site. FAD contacts are provided by Asp-313 and Ala-321. The active-site Proton acceptor is the His-445.

The protein belongs to the class-I pyridine nucleotide-disulfide oxidoreductase family. As to quaternary structure, homodimer. FAD is required as a cofactor.

Its subcellular location is the cytoplasm. The enzyme catalyses N(6)-[(R)-dihydrolipoyl]-L-lysyl-[protein] + NAD(+) = N(6)-[(R)-lipoyl]-L-lysyl-[protein] + NADH + H(+). LPD-3 may substitute for lipoamide dehydrogenase of the 2-oxoglutarate dehydrogenase and pyruvate multienzyme complexes when the latter is inactive or missing. The sequence is that of Dihydrolipoyl dehydrogenase 3 (lpd3) from Pseudomonas putida (Arthrobacter siderocapsulatus).